Reading from the N-terminus, the 250-residue chain is Probable dihydroorotate dehydrogenase B (NAD(+)), electron transfer subunit (250 aa).

Positions 1–89 (MINLKIEENV…RGPYGNGFDV (89 aa)) constitute an FAD-binding FR-type domain. [2Fe-2S] cluster contacts are provided by Cys-200, Cys-205, Cys-208, and Cys-216.

It belongs to the PyrK family. As to quaternary structure, heterotetramer of 2 PyrK and 2 PyrD type B subunits. [2Fe-2S] cluster is required as a cofactor. The cofactor is FAD.

Its pathway is pyrimidine metabolism; UMP biosynthesis via de novo pathway; orotate from (S)-dihydroorotate (NAD(+) route): step 1/1. Its function is as follows. Responsible for channeling the electrons from the oxidation of dihydroorotate from the FMN redox center in the PyrD type B subunit to the ultimate electron acceptor NAD(+). The chain is Probable dihydroorotate dehydrogenase B (NAD(+)), electron transfer subunit from Thermoplasma volcanium (strain ATCC 51530 / DSM 4299 / JCM 9571 / NBRC 15438 / GSS1).